The primary structure comprises 231 residues: MLTRKQIELLEFIHKRLQRDGVPPSFDEMKDALDLRSKSGIHRLITALEERGFIRRLAHKARAIEIVKLPEALMGSMQGGFAPQVIDGDRLDPPVGAMPVSGIHAVELPVMGKIAAGTPIEAISEVSHTVAVPGQMMRQDAEHYALEVKGDSMINAGINNGDIVVIRETSVAESGDIVVALVDGHEATLKTLRKRGNAIALEAANPAYETRVYPAEMVRVQGKLVGLIRSY.

The segment at residues F26 to T46 is a DNA-binding region (H-T-H motif). Residues S152 and K190 each act as for autocatalytic cleavage activity in the active site.

Belongs to the peptidase S24 family. In terms of assembly, homodimer.

It carries out the reaction Hydrolysis of Ala-|-Gly bond in repressor LexA.. Represses a number of genes involved in the response to DNA damage (SOS response), including recA and lexA. In the presence of single-stranded DNA, RecA interacts with LexA causing an autocatalytic cleavage which disrupts the DNA-binding part of LexA, leading to derepression of the SOS regulon and eventually DNA repair. This Dinoroseobacter shibae (strain DSM 16493 / NCIMB 14021 / DFL 12) protein is LexA repressor.